Reading from the N-terminus, the 485-residue chain is Pyruvate kinase (485 aa).

Arginine 33 is a binding site for substrate. 4 residues coordinate K(+): asparagine 35, serine 37, aspartate 67, and threonine 68. 35-38 (NFSH) serves as a coordination point for ATP. Positions 74 and 155 each coordinate ATP. Residue glutamate 221 coordinates Mg(2+). The substrate site is built by glycine 244, aspartate 245, and threonine 277. Position 245 (aspartate 245) interacts with Mg(2+).

It belongs to the pyruvate kinase family. In terms of assembly, homotetramer. Mg(2+) serves as cofactor. The cofactor is K(+).

It catalyses the reaction pyruvate + ATP = phosphoenolpyruvate + ADP + H(+). It functions in the pathway carbohydrate degradation; glycolysis; pyruvate from D-glyceraldehyde 3-phosphate: step 5/5. This chain is Pyruvate kinase (pyk), found in Chlamydia trachomatis serovar D (strain ATCC VR-885 / DSM 19411 / UW-3/Cx).